Consider the following 173-residue polypeptide: MIMKMTHLNMKDFNKPNEPFVVFGRMIPAFENGVWTYTEERFSKPYFKQYEDDDMDVSYVEEEGKAAFLYYLENNCIGRIKIRSNWNGYALIEDIAVAKDYRKKGVGTALLHKAIEWAKENHFCGLMLETQDINISACHFYAKHHFIIGAVDTMLYSNFPTANEIAIFWYYKF.

One can recognise an N-acetyltransferase domain in the interval 21–173; sequence VVFGRMIPAF…EIAIFWYYKF (153 aa).

Belongs to the acetyltransferase family. GNAT subfamily. As to quaternary structure, homodimer.

It catalyses the reaction streptothricin D + acetyl-CoA = N(beta)-acetylstreptothricin D + CoA + H(+). It carries out the reaction streptothricin F + acetyl-CoA = N(beta)-acetylstreptothricin F + CoA + H(+). Functionally, involved in resistance to streptothricin, a broad-spectrum antibiotic produced by streptomycetes. Detoxifies streptothricin via acetylation of the beta amino group of the first beta-lysyl moiety of streptothricin. This is Streptothricin acetyltransferase A from Bacillus subtilis (strain 168).